The sequence spans 285 residues: HTH-type transcriptional regulator MurR (285 aa).

The region spanning 1–77 (MLYLTKISNA…MALIGEYSAS (77 aa)) is the HTH rpiR-type domain. Residues 37 to 56 (SRQMAKQLGISQSSIVKFAQ) constitute a DNA-binding region (H-T-H motif). Residues 128 to 279 (IIEVISKAPF…SLKMIQRSSE (152 aa)) form the SIS domain.

Homotetramer.

It functions in the pathway amino-sugar metabolism; N-acetylmuramate degradation [regulation]. Its function is as follows. Represses the expression of the murPQ operon involved in the uptake and degradation of N-acetylmuramic acid (MurNAc). Binds to two adjacent inverted repeats within the operator region. MurNAc 6-phosphate, the substrate of MurQ, is the specific inducer that weakens binding of MurR to the operator. The polypeptide is HTH-type transcriptional regulator MurR (Shigella boydii serotype 18 (strain CDC 3083-94 / BS512)).